Consider the following 323-residue polypeptide: Ribosomal RNA small subunit methyltransferase H (323 aa).

S-adenosyl-L-methionine contacts are provided by residues 39-41, D57, F84, D103, and Q110; that span reads GGY.

The protein belongs to the methyltransferase superfamily. RsmH family.

Its subcellular location is the cytoplasm. It catalyses the reaction cytidine(1402) in 16S rRNA + S-adenosyl-L-methionine = N(4)-methylcytidine(1402) in 16S rRNA + S-adenosyl-L-homocysteine + H(+). Functionally, specifically methylates the N4 position of cytidine in position 1402 (C1402) of 16S rRNA. This chain is Ribosomal RNA small subunit methyltransferase H, found in Gluconobacter oxydans (strain 621H) (Gluconobacter suboxydans).